Consider the following 212-residue polypeptide: Thymidylate kinase (212 aa).

11–18 (GPDGAGKS) serves as a coordination point for ATP.

This sequence belongs to the thymidylate kinase family.

The enzyme catalyses dTMP + ATP = dTDP + ADP. In terms of biological role, phosphorylation of dTMP to form dTDP in both de novo and salvage pathways of dTTP synthesis. This is Thymidylate kinase from Streptococcus gordonii (strain Challis / ATCC 35105 / BCRC 15272 / CH1 / DL1 / V288).